Here is a 600-residue protein sequence, read N- to C-terminus: Adenine deaminase (600 aa).

It belongs to the metallo-dependent hydrolases superfamily. Adenine deaminase family. It depends on Mn(2+) as a cofactor.

It carries out the reaction adenine + H2O + H(+) = hypoxanthine + NH4(+). The sequence is that of Adenine deaminase from Chelativorans sp. (strain BNC1).